The following is a 419-amino-acid chain: UDP-N-acetylglucosamine 1-carboxyvinyltransferase 2 (419 aa).

Residue 22 to 23 (KN) participates in phosphoenolpyruvate binding. Arg-92 contributes to the UDP-N-acetyl-alpha-D-glucosamine binding site. Cys-116 acts as the Proton donor in catalysis. Residue Cys-116 is modified to 2-(S-cysteinyl)pyruvic acid O-phosphothioketal. UDP-N-acetyl-alpha-D-glucosamine is bound by residues 121–125 (RPIDL), Asp-306, and Ile-328.

It belongs to the EPSP synthase family. MurA subfamily.

The protein localises to the cytoplasm. The enzyme catalyses phosphoenolpyruvate + UDP-N-acetyl-alpha-D-glucosamine = UDP-N-acetyl-3-O-(1-carboxyvinyl)-alpha-D-glucosamine + phosphate. It functions in the pathway cell wall biogenesis; peptidoglycan biosynthesis. Cell wall formation. Adds enolpyruvyl to UDP-N-acetylglucosamine. The sequence is that of UDP-N-acetylglucosamine 1-carboxyvinyltransferase 2 from Streptococcus mutans serotype c (strain ATCC 700610 / UA159).